The primary structure comprises 130 residues: Small ribosomal subunit protein uS9 (130 aa).

Belongs to the universal ribosomal protein uS9 family.

The protein is Small ribosomal subunit protein uS9 of Hahella chejuensis (strain KCTC 2396).